A 183-amino-acid polypeptide reads, in one-letter code: Tail fiber assembly protein (183 aa).

Belongs to the tfa family.

Functionally, chaperone involved, together with gp57, in the assembly of the distal-half tail fiber of T4. It is necessary for the maturation of protein gp37 to the dimeric structural subunit P37. This Escherichia coli (Bacteriophage T4) protein is Tail fiber assembly protein (38).